We begin with the raw amino-acid sequence, 426 residues long: Squamosa promoter-binding-like protein 10 (426 aa).

Residues 178–255 form an SBP-type zinc finger; it reads PPRCQAEGCK…AEHNRRRRKP (78 aa). Positions 181, 186, 203, 206, 222, 225, 229, and 241 each coordinate Zn(2+). The Bipartite nuclear localization signal motif lies at 238 to 254; it reads KRSCRKRLAEHNRRRRK. 2 stretches are compositionally biased toward low complexity: residues 268–287 and 401–417; these read DAAAAPVAAGKKPSGGAATS and SDQNNDNSHNNGGNNNN. Disordered regions lie at residues 268 to 290 and 392 to 426; these read DAAAAPVAAGKKPSGGAATSYTG and PSTATNGEVSDQNNDNSHNNGGNNNNMHLFEVDFM.

In terms of tissue distribution, expressed in stems, leaf sheaths, and young panicles.

Its subcellular location is the nucleus. Its function is as follows. Trans-acting factor that binds specifically to the consensus nucleotide sequence 5'-TNCGTACAA-3'. The protein is Squamosa promoter-binding-like protein 10 (SPL10) of Oryza sativa subsp. indica (Rice).